Reading from the N-terminus, the 335-residue chain is DNA-directed RNA polymerase subunit alpha (335 aa).

Residues 1–233 (MMLNATEFLT…QQISIFVDLE (233 aa)) form an alpha N-terminal domain (alpha-NTD) region. Positions 247 to 335 (VDPVLLRPVD…VDDRFSYRSR (89 aa)) are alpha C-terminal domain (alpha-CTD).

Belongs to the RNA polymerase alpha chain family. Homodimer. The RNAP catalytic core consists of 2 alpha, 1 beta, 1 beta' and 1 omega subunit. When a sigma factor is associated with the core the holoenzyme is formed, which can initiate transcription.

The enzyme catalyses RNA(n) + a ribonucleoside 5'-triphosphate = RNA(n+1) + diphosphate. In terms of biological role, DNA-dependent RNA polymerase catalyzes the transcription of DNA into RNA using the four ribonucleoside triphosphates as substrates. The sequence is that of DNA-directed RNA polymerase subunit alpha from Psychrobacter arcticus (strain DSM 17307 / VKM B-2377 / 273-4).